The sequence spans 644 residues: Threonine--tRNA ligase (644 aa).

The region spanning 1 to 61 is the TGS domain; sequence MVAITLPDGN…TQDASVEIVT (61 aa). Positions 242 to 533 are catalytic; the sequence is DHRKIGKALN…LIEHYAGWMP (292 aa). Cys333, His384, and His510 together coordinate Zn(2+).

The protein belongs to the class-II aminoacyl-tRNA synthetase family. As to quaternary structure, homodimer. Zn(2+) is required as a cofactor.

It is found in the cytoplasm. The enzyme catalyses tRNA(Thr) + L-threonine + ATP = L-threonyl-tRNA(Thr) + AMP + diphosphate + H(+). Catalyzes the attachment of threonine to tRNA(Thr) in a two-step reaction: L-threonine is first activated by ATP to form Thr-AMP and then transferred to the acceptor end of tRNA(Thr). Also edits incorrectly charged L-seryl-tRNA(Thr). The sequence is that of Threonine--tRNA ligase from Psychrobacter sp. (strain PRwf-1).